The chain runs to 554 residues: Aspartyl/glutamyl-tRNA(Asn/Gln) amidotransferase subunit B (554 aa).

The disordered stretch occupies residues 491 to 554; the sequence is AEQPTAPPPE…TPVSHQDAHA (64 aa). The segment covering 502-540 has biased composition (low complexity); the sequence is ESAAETPEAPPAVEDAPPEAPTEAITAEAGSAEAITAAS.

It belongs to the GatB/GatE family. GatB subfamily. Heterotrimer of A, B and C subunits.

It carries out the reaction L-glutamyl-tRNA(Gln) + L-glutamine + ATP + H2O = L-glutaminyl-tRNA(Gln) + L-glutamate + ADP + phosphate + H(+). It catalyses the reaction L-aspartyl-tRNA(Asn) + L-glutamine + ATP + H2O = L-asparaginyl-tRNA(Asn) + L-glutamate + ADP + phosphate + 2 H(+). Its function is as follows. Allows the formation of correctly charged Asn-tRNA(Asn) or Gln-tRNA(Gln) through the transamidation of misacylated Asp-tRNA(Asn) or Glu-tRNA(Gln) in organisms which lack either or both of asparaginyl-tRNA or glutaminyl-tRNA synthetases. The reaction takes place in the presence of glutamine and ATP through an activated phospho-Asp-tRNA(Asn) or phospho-Glu-tRNA(Gln). The polypeptide is Aspartyl/glutamyl-tRNA(Asn/Gln) amidotransferase subunit B (Gloeobacter violaceus (strain ATCC 29082 / PCC 7421)).